The chain runs to 401 residues: Odorant receptor 88a (401 aa).

Over 1-26 the chain is Cytoplasmic; the sequence is MKPTEIKKPYRMEEFLRPQMFQEVAQ. Residues 27-47 traverse the membrane as a helical segment; sequence MVHFQWRRNPVDNSMVNASMV. The Extracellular portion of the chain corresponds to 48–52; that stretch reads PFCLS. The chain crosses the membrane as a helical span at residues 53 to 73; that stretch reads AFLNVLFFGCNGWDIIGHFWL. The Cytoplasmic segment spans residues 74 to 142; sequence GHPANQNPPV…NFWQRYRFIR (69 aa). Residues 143 to 163 traverse the membrane as a helical segment; sequence IYSHLGGPMFCVVPLALFLLT. Over 164–191 the chain is Extracellular; sequence HEGKDTPVAQHEQLLGGWLPCGVRKDPN. The helical transmembrane segment at 192-212 threads the bilayer; that stretch reads FYLLVWSFDLMCTTCGVSFFV. Over 213–277 the chain is Cytoplasmic; sequence TFDNLFNVMQ…LCRKYNDIFK (65 aa). Residues 278–298 form a helical membrane-spanning segment; that stretch reads VAFLVSNFVGAGSLCFYLFML. The Extracellular portion of the chain corresponds to 299 to 303; sequence SETSD. A helical transmembrane segment spans residues 304-324; that stretch reads VLIIAQYILPTLVLVGFTFEI. The Cytoplasmic segment spans residues 325-370; the sequence is CLRGTQLEKASEGLESSLRSQEWYLGSRRYRKFYLLWTQYCQRTQQ. The chain crosses the membrane as a helical span at residues 371–391; it reads LGAFGLIQVNMVHFTEIMQLA. Residues 392 to 401 lie on the Extracellular side of the membrane; the sequence is YRLFTFLKSH.

The protein belongs to the insect chemoreceptor superfamily. Heteromeric odorant receptor channel (TC 1.A.69) family. Or49a subfamily. As to quaternary structure, interacts with Orco. Complexes exist early in the endomembrane system in olfactory sensory neurons (OSNs), coupling these complexes to the conserved ciliary trafficking pathway. As to expression, expressed in olfactory sensory neurons in the antenna.

It is found in the cell membrane. Functionally, odorant receptor which mediates acceptance or avoidance behavior, depending on its substrates. The odorant receptor repertoire encodes a large collection of odor stimuli that vary widely in identity, intensity, and duration. May form a complex with Orco to form odorant-sensing units, providing sensitive and prolonged odorant signaling and calcium permeability. The protein is Odorant receptor 88a (Or88a) of Drosophila melanogaster (Fruit fly).